We begin with the raw amino-acid sequence, 123 residues long: S-adenosylmethionine decarboxylase proenzyme 2 (123 aa).

Catalysis depends on Ser65, which acts as the Schiff-base intermediate with substrate; via pyruvic acid. The residue at position 65 (Ser65) is a Pyruvic acid (Ser); by autocatalysis. Residue His70 is the Proton acceptor; for processing activity of the active site. The active-site Proton donor; for catalytic activity is the Cys85.

Belongs to the prokaryotic AdoMetDC family. Type 1 subfamily. In terms of assembly, heterotetramer of two alpha and two beta chains arranged as a dimer of alpha/beta heterodimers. Pyruvate is required as a cofactor. Is synthesized initially as an inactive proenzyme. Formation of the active enzyme involves a self-maturation process in which the active site pyruvoyl group is generated from an internal serine residue via an autocatalytic post-translational modification. Two non-identical subunits are generated from the proenzyme in this reaction, and the pyruvate is formed at the N-terminus of the alpha chain, which is derived from the carboxyl end of the proenzyme. The post-translation cleavage follows an unusual pathway, termed non-hydrolytic serinolysis, in which the side chain hydroxyl group of the serine supplies its oxygen atom to form the C-terminus of the beta chain, while the remainder of the serine residue undergoes an oxidative deamination to produce ammonia and the pyruvoyl group blocking the N-terminus of the alpha chain.

It carries out the reaction S-adenosyl-L-methionine + H(+) = S-adenosyl 3-(methylsulfanyl)propylamine + CO2. It functions in the pathway amine and polyamine biosynthesis; S-adenosylmethioninamine biosynthesis; S-adenosylmethioninamine from S-adenosyl-L-methionine: step 1/1. Its function is as follows. Catalyzes the decarboxylation of S-adenosylmethionine to S-adenosylmethioninamine (dcAdoMet), the propylamine donor required for the synthesis of the polyamines spermine and spermidine from the diamine putrescine. This chain is S-adenosylmethionine decarboxylase proenzyme 2, found in Bacillus anthracis.